Consider the following 30-residue polypeptide: Kappa-sparatoxin-Hv1b (30 aa).

Intrachain disulfides connect Cys3-Cys17, Cys10-Cys22, and Cys16-Cys26. Trp30 is subject to Tryptophan amide.

The protein belongs to the neurotoxin 10 (Hwtx-1) family. 19 (HpTX2) subfamily. In terms of tissue distribution, expressed by the venom gland.

It localises to the secreted. Its function is as follows. Inhibitor of voltage-gated potassium channels of the Kv4/KCND family. Inhibition of Kv4.3/KCND3 and Kv4.2/KCND2 is strongly voltage-dependent, while inhibition of Kv4.1/KCND1 shows less voltage-dependence. Its binding site may be near the potassium channel voltage sensor. Also blocks calcium channels. The protein is Kappa-sparatoxin-Hv1b of Heteropoda venatoria (Brown huntsman spider).